A 208-amino-acid polypeptide reads, in one-letter code: FMN-dependent NADH:quinone oxidoreductase 1 (208 aa).

17–19 (SVS) provides a ligand contact to FMN.

It belongs to the azoreductase type 1 family. As to quaternary structure, homodimer. The cofactor is FMN.

It catalyses the reaction 2 a quinone + NADH + H(+) = 2 a 1,4-benzosemiquinone + NAD(+). The catalysed reaction is N,N-dimethyl-1,4-phenylenediamine + anthranilate + 2 NAD(+) = 2-(4-dimethylaminophenyl)diazenylbenzoate + 2 NADH + 2 H(+). Its function is as follows. Quinone reductase that provides resistance to thiol-specific stress caused by electrophilic quinones. Functionally, also exhibits azoreductase activity. Catalyzes the reductive cleavage of the azo bond in aromatic azo compounds to the corresponding amines. This chain is FMN-dependent NADH:quinone oxidoreductase 1, found in Listeria innocua serovar 6a (strain ATCC BAA-680 / CLIP 11262).